The sequence spans 232 residues: Ribonuclease 3 (232 aa).

Residues 5–134 (QTVLKNHFAI…FLGALLLDKD (130 aa)) enclose the RNase III domain. E47 provides a ligand contact to Mg(2+). Residue D51 is part of the active site. Mg(2+) contacts are provided by D120 and E123. The active site involves E123. A DRBM domain is found at 160–229 (DYKTHLQELL…AKNAVEKGLD (70 aa)).

Belongs to the ribonuclease III family. As to quaternary structure, homodimer. The cofactor is Mg(2+).

The protein resides in the cytoplasm. The enzyme catalyses Endonucleolytic cleavage to 5'-phosphomonoester.. Digests double-stranded RNA. Involved in the processing of primary rRNA transcript to yield the immediate precursors to the large and small rRNAs (23S and 16S). Processes some mRNAs, and tRNAs when they are encoded in the rRNA operon. Processes pre-crRNA and tracrRNA of type II CRISPR loci if present in the organism. The polypeptide is Ribonuclease 3 (Streptococcus pneumoniae (strain Taiwan19F-14)).